A 151-amino-acid polypeptide reads, in one-letter code: 3-hydroxyacyl-[acyl-carrier-protein] dehydratase FabZ (151 aa).

His-56 is an active-site residue.

It belongs to the thioester dehydratase family. FabZ subfamily.

The protein resides in the cytoplasm. The catalysed reaction is a (3R)-hydroxyacyl-[ACP] = a (2E)-enoyl-[ACP] + H2O. Functionally, involved in unsaturated fatty acids biosynthesis. Catalyzes the dehydration of short chain beta-hydroxyacyl-ACPs and long chain saturated and unsaturated beta-hydroxyacyl-ACPs. The protein is 3-hydroxyacyl-[acyl-carrier-protein] dehydratase FabZ of Nitrobacter winogradskyi (strain ATCC 25391 / DSM 10237 / CIP 104748 / NCIMB 11846 / Nb-255).